Consider the following 617-residue polypeptide: 1-deoxy-D-xylulose-5-phosphate synthase (617 aa).

Thiamine diphosphate is bound by residues H77 and 118-120 (GHS). Mg(2+) is bound at residue D149. Thiamine diphosphate is bound by residues 150–151 (GA), N178, Y287, and E368. A Mg(2+)-binding site is contributed by N178.

The protein belongs to the transketolase family. DXPS subfamily. In terms of assembly, homodimer. Requires Mg(2+) as cofactor. It depends on thiamine diphosphate as a cofactor.

It catalyses the reaction D-glyceraldehyde 3-phosphate + pyruvate + H(+) = 1-deoxy-D-xylulose 5-phosphate + CO2. It functions in the pathway metabolic intermediate biosynthesis; 1-deoxy-D-xylulose 5-phosphate biosynthesis; 1-deoxy-D-xylulose 5-phosphate from D-glyceraldehyde 3-phosphate and pyruvate: step 1/1. Catalyzes the acyloin condensation reaction between C atoms 2 and 3 of pyruvate and glyceraldehyde 3-phosphate to yield 1-deoxy-D-xylulose-5-phosphate (DXP). In Haemophilus ducreyi (strain 35000HP / ATCC 700724), this protein is 1-deoxy-D-xylulose-5-phosphate synthase.